We begin with the raw amino-acid sequence, 592 residues long: Arginine--tRNA ligase (592 aa).

A 'HIGH' region motif is present at residues Ala-129 to His-139.

Belongs to the class-I aminoacyl-tRNA synthetase family. As to quaternary structure, monomer.

The protein localises to the cytoplasm. It carries out the reaction tRNA(Arg) + L-arginine + ATP = L-arginyl-tRNA(Arg) + AMP + diphosphate. The polypeptide is Arginine--tRNA ligase (Dichelobacter nodosus (strain VCS1703A)).